We begin with the raw amino-acid sequence, 421 residues long: UDP-N-acetylglucosamine 1-carboxyvinyltransferase 2 (421 aa).

A phosphoenolpyruvate-binding site is contributed by 22–23; it reads KN. Arg-95 is a UDP-N-acetyl-alpha-D-glucosamine binding site. The active-site Proton donor is the Cys-119. Cys-119 is subject to 2-(S-cysteinyl)pyruvic acid O-phosphothioketal. UDP-N-acetyl-alpha-D-glucosamine-binding positions include 124-128, Asp-308, and Val-330; that span reads RPIEQ.

The protein belongs to the EPSP synthase family. MurA subfamily.

The protein localises to the cytoplasm. It catalyses the reaction phosphoenolpyruvate + UDP-N-acetyl-alpha-D-glucosamine = UDP-N-acetyl-3-O-(1-carboxyvinyl)-alpha-D-glucosamine + phosphate. It functions in the pathway cell wall biogenesis; peptidoglycan biosynthesis. In terms of biological role, cell wall formation. Adds enolpyruvyl to UDP-N-acetylglucosamine. The sequence is that of UDP-N-acetylglucosamine 1-carboxyvinyltransferase 2 from Staphylococcus haemolyticus (strain JCSC1435).